The sequence spans 369 residues: 4-hydroxy-3-methylbut-2-en-1-yl diphosphate synthase (flavodoxin) (369 aa).

Residues Cys270, Cys273, Cys305, and Glu312 each coordinate [4Fe-4S] cluster.

Belongs to the IspG family. [4Fe-4S] cluster is required as a cofactor.

The catalysed reaction is (2E)-4-hydroxy-3-methylbut-2-enyl diphosphate + oxidized [flavodoxin] + H2O + 2 H(+) = 2-C-methyl-D-erythritol 2,4-cyclic diphosphate + reduced [flavodoxin]. It functions in the pathway isoprenoid biosynthesis; isopentenyl diphosphate biosynthesis via DXP pathway; isopentenyl diphosphate from 1-deoxy-D-xylulose 5-phosphate: step 5/6. Functionally, converts 2C-methyl-D-erythritol 2,4-cyclodiphosphate (ME-2,4cPP) into 1-hydroxy-2-methyl-2-(E)-butenyl 4-diphosphate. In Pseudomonas putida (strain ATCC 47054 / DSM 6125 / CFBP 8728 / NCIMB 11950 / KT2440), this protein is 4-hydroxy-3-methylbut-2-en-1-yl diphosphate synthase (flavodoxin).